Consider the following 406-residue polypeptide: Tryptophan 2,3-dioxygenase (406 aa).

Substrate contacts are provided by residues Phe72–His76 and Arg144. His328 serves as a coordination point for heme. Thr342 contacts substrate.

The protein belongs to the tryptophan 2,3-dioxygenase family. As to quaternary structure, homotetramer. Dimer of dimers. Heme serves as cofactor.

It carries out the reaction L-tryptophan + O2 = N-formyl-L-kynurenine. The protein operates within amino-acid degradation; L-tryptophan degradation via kynurenine pathway; L-kynurenine from L-tryptophan: step 1/2. Heme-dependent dioxygenase that catalyzes the oxidative cleavage of the L-tryptophan (L-Trp) pyrrole ring and converts L-tryptophan to N-formyl-L-kynurenine. Catalyzes the oxidative cleavage of the indole moiety. In Xenopus laevis (African clawed frog), this protein is Tryptophan 2,3-dioxygenase.